The following is a 132-amino-acid chain: Large ribosomal subunit protein uL14 (132 aa).

This sequence belongs to the universal ribosomal protein uL14 family. Part of the 50S ribosomal subunit. Forms a cluster with proteins L3 and L24e, part of which may contact the 16S rRNA in 2 intersubunit bridges.

Binds to 23S rRNA. Forms part of two intersubunit bridges in the 70S ribosome. The polypeptide is Large ribosomal subunit protein uL14 (Methanocaldococcus jannaschii (strain ATCC 43067 / DSM 2661 / JAL-1 / JCM 10045 / NBRC 100440) (Methanococcus jannaschii)).